A 589-amino-acid polypeptide reads, in one-letter code: Aspartate--tRNA ligase 2 (589 aa).

Glutamate 174 contacts L-aspartate. The tract at residues 198–201 is aspartate; sequence QITK. Arginine 220 contacts L-aspartate. ATP contacts are provided by residues 220-222 and glutamine 229; that span reads RDE. Histidine 443 is an L-aspartate binding site. Residue glutamate 477 participates in ATP binding. Arginine 484 is a binding site for L-aspartate. Position 529-532 (529-532) interacts with ATP; it reads GLDR.

This sequence belongs to the class-II aminoacyl-tRNA synthetase family. Type 1 subfamily. As to quaternary structure, homodimer.

The protein resides in the cytoplasm. The enzyme catalyses tRNA(Asp) + L-aspartate + ATP = L-aspartyl-tRNA(Asp) + AMP + diphosphate. Functionally, catalyzes the attachment of L-aspartate to tRNA(Asp) in a two-step reaction: L-aspartate is first activated by ATP to form Asp-AMP and then transferred to the acceptor end of tRNA(Asp). The polypeptide is Aspartate--tRNA ligase 2 (Streptococcus mutans serotype c (strain ATCC 700610 / UA159)).